The sequence spans 147 residues: Large ribosomal subunit protein bL9 (147 aa).

This sequence belongs to the bacterial ribosomal protein bL9 family.

Its function is as follows. Binds to the 23S rRNA. The chain is Large ribosomal subunit protein bL9 from Cytophaga hutchinsonii (strain ATCC 33406 / DSM 1761 / CIP 103989 / NBRC 15051 / NCIMB 9469 / D465).